Here is a 1077-residue protein sequence, read N- to C-terminus: ATP-dependent DNA helicase MPH1 (1077 aa).

One can recognise a Helicase ATP-binding domain in the interval 99–266 (IVHRALFENV…EVVDNLQISK (168 aa)). Position 112 to 119 (112 to 119 (IPTGMGKT)) interacts with ATP. A DEAH box motif is present at residues 214-217 (DEAH). The region spanning 511 to 660 (KKVDRIRRLE…SLNYKVTDRI (150 aa)) is the Helicase C-terminal domain. Disordered stretches follow at residues 536–556 (EKLA…ISGM) and 831–859 (TLSS…PKRQ). The segment covering 831 to 841 (TLSSDNKSTPD) has biased composition (polar residues).

The protein belongs to the DEAD box helicase family. DEAH subfamily. FANCM sub-subfamily. Interacts with the MHF histone-fold complex to form the FANCM-MHF complex.

The protein resides in the nucleus. The catalysed reaction is ATP + H2O = ADP + phosphate + H(+). Its function is as follows. ATP-dependent DNA helicase involved in DNA damage repair by homologous recombination and in genome maintenance. Capable of unwinding D-loops. Plays a role in limiting crossover recombinants during mitotic DNA double-strand break (DSB) repair. Component of a FANCM-MHF complex which promotes gene conversion at blocked replication forks, probably by reversal of the stalled fork. This is ATP-dependent DNA helicase MPH1 from Eremothecium gossypii (strain ATCC 10895 / CBS 109.51 / FGSC 9923 / NRRL Y-1056) (Yeast).